Consider the following 184-residue polypeptide: Tumor necrosis factor alpha-induced protein 8-like protein 2 (184 aa).

The protein belongs to the TNFAIP8 family. TNFAIP8L2 subfamily. As to quaternary structure, may interact with CASP8; however, such result is unclear since could not reproduce the interaction with CASP8. Interacts with RAC1. Post-translationally, ubiquitinated in a BTRC-depdent manner; leading to degradation mediated through the proteasome pathway.

It is found in the cytoplasm. Its subcellular location is the nucleus. The protein resides in the lysosome. Its function is as follows. Acts as a negative regulator of innate and adaptive immunity by maintaining immune homeostasis. Plays a regulatory role in the Toll-like signaling pathway by determining the strength of LPS-induced signaling and gene expression. Inhibits TCR-mediated T-cell activation and negatively regulate T-cell function to prevent hyperresponsiveness. Also inhibits autolysosome formation via negatively modulating MTOR activation by interacting with RAC1 and promoting the disassociation of the RAC1-MTOR complex. Plays an essential role in NK-cell biology by acting as a checkpoint and displaying an expression pattern correlating with NK-cell maturation process and by negatively regulating NK-cell maturation and antitumor immunity. Mechanistically, suppresses IL-15-triggered mTOR activity in NK-cells. This is Tumor necrosis factor alpha-induced protein 8-like protein 2 (TNFAIP8L2) from Rhinolophus ferrumequinum (Greater horseshoe bat).